A 1052-amino-acid chain; its full sequence is Error-prone DNA polymerase (1052 aa).

The protein belongs to the DNA polymerase type-C family. DnaE2 subfamily.

It is found in the cytoplasm. It catalyses the reaction DNA(n) + a 2'-deoxyribonucleoside 5'-triphosphate = DNA(n+1) + diphosphate. Functionally, DNA polymerase involved in damage-induced mutagenesis and translesion synthesis (TLS). It is not the major replicative DNA polymerase. The protein is Error-prone DNA polymerase of Bordetella parapertussis (strain 12822 / ATCC BAA-587 / NCTC 13253).